A 204-amino-acid chain; its full sequence is Copper-binding protein CutI (204 aa).

The N-terminal stretch at 1–26 is a signal peptide; the sequence is MLKKIALTLCPAIVGSLLFFTAPASA. Cu(2+)-binding residues include histidine 27 and glutamate 50. Residues 27 to 178 are Extracellular-facing; the sequence is HVSVKPAESA…DDSENSGSSA (152 aa). The disordered stretch occupies residues 146-176; that stretch reads PHSITNITSAKQVTDEHGATKTEDDSENSGS. Residues 147–157 show a composition bias toward polar residues; that stretch reads HSITNITSAKQ. A compositionally biased stretch (basic and acidic residues) spans 158–168; the sequence is VTDEHGATKTE. The chain crosses the membrane as a helical span at residues 179–199; that stretch reads LDITAMVLSAAAIILSVAALV. Residues 200–204 lie on the Cytoplasmic side of the membrane; that stretch reads KKKRA.

It is found in the cell membrane. Its function is as follows. Copper-binding protein that probably plays a role in copper homeostasis. May act as metallochaperone, possibly to facilitate copper uptake via the CutJ/YcnJ importer. Preferentially binds Cu in its oxidized Cu(II) state in a 1:1 stoichiometry. The polypeptide is Copper-binding protein CutI (Bacillus subtilis (strain 168)).